The sequence spans 787 residues: Protein PAT1 homolog 2 (787 aa).

Disordered stretches follow at residues 94-120, 134-221, 338-374, 411-445, and 765-787; these read KHLG…WTQD, EQVQ…NASP, VREH…GLQF, LAKK…QQPQ, and VSES…FVRG. A compositionally biased stretch (polar residues) spans 105–120; sequence GSFSRESSTATDWTQD. Residues 142-153 are compositionally biased toward low complexity; the sequence is SSQPQSSPNSNS. Polar residues-rich tracts occupy residues 154–171, 180–198, and 208–221; these read LYRT…QHYS, STFT…SSPS, and GGSQ…NASP. 2 positions are modified to phosphoserine: S184 and S192. The segment covering 341–353 has biased composition (basic residues); sequence HKHKSSHRSRKNR. Polar residues-rich tracts occupy residues 355–373 and 436–445; these read GISQ…SGLQ and SRNSSDQQPQ.

Functionally, activator of mRNA decapping. Involved in mRNA decay via decapping. The protein is Protein PAT1 homolog 2 of Arabidopsis thaliana (Mouse-ear cress).